The chain runs to 345 residues: D-fructose 1,6-bisphosphatase class 2/sedoheptulose 1,7-bisphosphatase (345 aa).

The Mn(2+) site is built by Asp-33, Glu-57, Asp-97, and Glu-100. Substrate-binding positions include 100 to 102 (EGT), Tyr-131, 176 to 178 (RPR), and 198 to 200 (DGD). Residue Glu-225 coordinates Mn(2+).

This sequence belongs to the FBPase class 2 family. As to quaternary structure, homotetramer. It depends on Mn(2+) as a cofactor.

The enzyme catalyses beta-D-fructose 1,6-bisphosphate + H2O = beta-D-fructose 6-phosphate + phosphate. It catalyses the reaction D-sedoheptulose 1,7-bisphosphate + H2O = D-sedoheptulose 7-phosphate + phosphate. Its pathway is carbohydrate biosynthesis; Calvin cycle. In terms of biological role, catalyzes the hydrolysis of fructose 1,6-bisphosphate (Fru 1,6-P2) and sedoheptulose 1,7-bisphosphate (Sed 1,7-P2) to fructose 6-phosphate and sedoheptulose 7-phosphate, respectively. This is D-fructose 1,6-bisphosphatase class 2/sedoheptulose 1,7-bisphosphatase from Trichodesmium erythraeum (strain IMS101).